The chain runs to 236 residues: CHD1 helical C-terminal domain containing protein 1 (236 aa).

Residues 1–29 (MEASDWQGGEGDKPLEKVGSVPCLERSSS) are disordered. The interval 44-145 (LSQDTFKICK…TNQTAKFLAA (102 aa)) is CHD1 helical C-terminal domain (CHCT). Residues 197–236 (LEEPRSSHCSRGDSLRKLPQKPKLKKKRIKERLESPKSCS) form a disordered region. Residues 198–212 (EEPRSSHCSRGDSLR) are compositionally biased toward basic and acidic residues. Residues 214–226 (LPQKPKLKKKRIK) are compositionally biased toward basic residues. Over residues 227–236 (ERLESPKSCS) the composition is skewed to basic and acidic residues.

As to expression, exclusively expressed in testes.

It is found in the cytoplasm. The protein localises to the nucleus. In terms of biological role, may play a role in regulation of apoptosis. The protein is CHD1 helical C-terminal domain containing protein 1 (Chct1) of Mus musculus (Mouse).